We begin with the raw amino-acid sequence, 496 residues long: Probable malate:quinone oxidoreductase (496 aa).

The protein belongs to the MQO family. FAD serves as cofactor.

The enzyme catalyses (S)-malate + a quinone = a quinol + oxaloacetate. It functions in the pathway carbohydrate metabolism; tricarboxylic acid cycle; oxaloacetate from (S)-malate (quinone route): step 1/1. In Prochlorococcus marinus (strain MIT 9303), this protein is Probable malate:quinone oxidoreductase.